A 445-amino-acid chain; its full sequence is Alkylglycerol monooxygenase (445 aa).

Helical transmembrane passes span 43-63 (ATPFFISLMLLELVVSWILKG) and 111-131 (WDSPWTWYSAFLGVDFGYYWF). In terms of domain architecture, Fatty acid hydroxylase spans 120–249 (AFLGVDFGYY…LIIWDKIFGT (130 aa)). The Histidine box-1 motif lies at 132–136 (HRMAH). The short motif at 145-149 (HQTHH) is the Histidine box-2 element. Residues 221–225 (HRVHH) carry the Histidine box-3 motif. The next 3 membrane-spanning stretches (helical) occupy residues 334–354 (LLKIYTVVQFALMLAFYEETF), 363–383 (VTLLLRVCFIILTLTSIGFLL), and 413–433 (VPSLSSAFEIVFSICIAFWGV).

This sequence belongs to the sterol desaturase family. TMEM195 subfamily. It depends on Fe cation as a cofactor.

The protein localises to the endoplasmic reticulum membrane. It catalyses the reaction 1-O-(1,2-saturated-alkyl)-sn-glycerol + (6R)-L-erythro-5,6,7,8-tetrahydrobiopterin + O2 = a 1-(1-hydroxyalkyl)-sn-glycerol + (6R)-L-erythro-6,7-dihydrobiopterin + H2O. Glyceryl-ether monooxygenase that cleaves the O-alkyl bond of ether lipids. Ether lipids are essential components of brain membranes. In Homo sapiens (Human), this protein is Alkylglycerol monooxygenase (AGMO).